The primary structure comprises 140 residues: Nucleoside diphosphate kinase (140 aa).

K11, F59, R87, T93, R104, and N114 together coordinate ATP. H117 (pros-phosphohistidine intermediate) is an active-site residue.

It belongs to the NDK family. Homotetramer. Mg(2+) is required as a cofactor.

It localises to the cytoplasm. It catalyses the reaction a 2'-deoxyribonucleoside 5'-diphosphate + ATP = a 2'-deoxyribonucleoside 5'-triphosphate + ADP. It carries out the reaction a ribonucleoside 5'-diphosphate + ATP = a ribonucleoside 5'-triphosphate + ADP. In terms of biological role, major role in the synthesis of nucleoside triphosphates other than ATP. The ATP gamma phosphate is transferred to the NDP beta phosphate via a ping-pong mechanism, using a phosphorylated active-site intermediate. In Brucella melitensis biotype 1 (strain ATCC 23456 / CCUG 17765 / NCTC 10094 / 16M), this protein is Nucleoside diphosphate kinase.